The chain runs to 594 residues: Type I restriction enzyme EcoEI specificity subunit (594 aa).

Belongs to the type-I restriction system S methylase family. The type I restriction/modification system is composed of three polypeptides R, M and S; the restriction enzyme has stoichiometry R(2)M(2)S(1) while the methyltransferase is M(2)S(1).

In terms of biological role, the specificity (S) subunit of a type I restriction enzyme; this subunit dictates DNA sequence specificity. The M and S subunits together form a methyltransferase (MTase) that methylates two adenine residues of the sequence 5'-GAGN(7)ATGC-3'. In the presence of the R subunit the complex can also act as an endonuclease, binding to the same target sequence but cutting the DNA some distance from this site. Whether the DNA is cut or modified depends on the methylation state of the target sequence. When the target site is unmodified, the DNA is cut. When the target site is hemimethylated, the complex acts as a maintenance MTase modifying the DNA so that both strands become methylated. After locating a non-methylated recognition site, the enzyme complex serves as a molecular motor that translocates DNA in an ATP-dependent manner until a collision occurs that triggers cleavage. This chain is Type I restriction enzyme EcoEI specificity subunit, found in Escherichia coli.